Consider the following 243-residue polypeptide: tRNA (guanine-N(1)-)-methyltransferase (243 aa).

S-adenosyl-L-methionine is bound by residues G111 and 130 to 135 (IGDYVL).

This sequence belongs to the RNA methyltransferase TrmD family. Homodimer.

It is found in the cytoplasm. The enzyme catalyses guanosine(37) in tRNA + S-adenosyl-L-methionine = N(1)-methylguanosine(37) in tRNA + S-adenosyl-L-homocysteine + H(+). In terms of biological role, specifically methylates guanosine-37 in various tRNAs. In Acholeplasma laidlawii (strain PG-8A), this protein is tRNA (guanine-N(1)-)-methyltransferase.